Here is a 716-residue protein sequence, read N- to C-terminus: Phenylalanine/tyrosine ammonia-lyase (716 aa).

The active-site Proton donor/acceptor is the Tyr110. The segment at residues 211–213 is a cross-link (5-imidazolinone (Ala-Gly)); that stretch reads ASG. Position 212 is a 2,3-didehydroalanine (Ser) (Ser212). The (E)-cinnamate site is built by Asn270, Gln360, Arg366, Asn397, Lys468, Glu496, and Asn499.

It belongs to the PAL/histidase family. As to quaternary structure, homotetramer. Dimer of dimers. In terms of processing, contains an active site 4-methylidene-imidazol-5-one (MIO), which is formed autocatalytically by cyclization and dehydration of residues Ala-Ser-Gly.

Its subcellular location is the cytoplasm. It catalyses the reaction L-phenylalanine = (E)-cinnamate + NH4(+). The catalysed reaction is L-tyrosine = (E)-4-coumarate + NH4(+). The protein operates within phenylpropanoid metabolism; trans-cinnamate biosynthesis; trans-cinnamate from L-phenylalanine: step 1/1. In terms of biological role, catalyzes the non-oxidative deamination of L-phenylalanine and L-tyrosine to form trans-cinnamic acid and p-coumaric acid respectively with similar efficiencies. Facilitates the commitment step in phenylpropanoid pathways that produce secondary metabolites such as lignins, coumarins and flavonoids. This Rhodotorula toruloides (Yeast) protein is Phenylalanine/tyrosine ammonia-lyase (PAL).